Here is an 874-residue protein sequence, read N- to C-terminus: Leucine--tRNA ligase (874 aa).

A 'HIGH' region motif is present at residues 43–53 (PYPSGRIHIGH). A 'KMSKS' region motif is present at residues 630–634 (KMSKS). Position 633 (lysine 633) interacts with ATP.

Belongs to the class-I aminoacyl-tRNA synthetase family.

Its subcellular location is the cytoplasm. It carries out the reaction tRNA(Leu) + L-leucine + ATP = L-leucyl-tRNA(Leu) + AMP + diphosphate. In Bradyrhizobium sp. (strain ORS 278), this protein is Leucine--tRNA ligase.